The following is a 364-amino-acid chain: Lysophosphatidic acid receptor 1 (364 aa).

Residues 1–50 lie on the Extracellular side of the membrane; it reads MAAAFTSSPVVSQPQFTAMNEQQCFSNESIAFFYNRSGKYLATEWNTVTK. 2 disulfides stabilise this stretch: Cys24–Cys190 and Cys188–Cys195. 2 N-linked (GlcNAc...) asparagine glycosylation sites follow: Asn27 and Asn35. A 1-acyl-sn-glycero-3-phosphate is bound at residue Lys39. The helical transmembrane segment at 51 to 75 threads the bilayer; it reads LVMGLGITVCIFIMLANLLVMVAIY. Residues 76–83 are Cytoplasmic-facing; the sequence is VNRRFHFP. The chain crosses the membrane as a helical span at residues 84–107; sequence IYYLMANLAAADFFAGLAYFYLMF. The Extracellular portion of the chain corresponds to 108–121; the sequence is NTGPNTRRLTVSTW. Residues 122–144 traverse the membrane as a helical segment; sequence LLRQGLIDTSLTVSVANLLAIAI. 124–129 lines the a 1-acyl-sn-glycero-3-phosphate pocket; it reads RQGLID. The Cytoplasmic segment spans residues 145–163; sequence ERHITVFRMQLHARMSNRR. A helical transmembrane segment spans residues 164–184; it reads VVVVIVVIWTMAIVMGAIPSV. Topologically, residues 185–204 are extracellular; sequence GWNCICDIENCSNMAPLYSD. The chain crosses the membrane as a helical span at residues 205–225; that stretch reads SYLVFWAIFNLVTFVVMVVLY. Trp210 contacts a 1-acyl-sn-glycero-3-phosphate. Over 226-255 the chain is Cytoplasmic; the sequence is AHIFGYVRQRTMRMSRHSSGPRRNRDTMMS. A helical transmembrane segment spans residues 256–280; sequence LLKTVVIVLGAFIICWTPGLVLLLL. The Extracellular segment spans residues 281 to 294; that stretch reads DVCCPQCDVLAYEK. A disulfide bridge connects residues Cys284 and Cys287. Residues 295 to 315 form a helical membrane-spanning segment; the sequence is FFLLLAEFNSAMNPIIYSYRD. At 316 to 364 the chain is on the cytoplasmic side; that stretch reads KEMSATFRQILCCQRSENTSGPTEGSDRSASSLNHTILAGVHSNDHSVV. Ser341 carries the phosphoserine modification. Thr351 carries the phosphothreonine modification.

The protein belongs to the G-protein coupled receptor 1 family. In terms of assembly, interacts with RALA and GRK2. Interacts with GNAQ and GNA13. Interacts with CD14; the interaction is enhanced by exposure to bacterial lipopolysaccharide (LPS). N-glycosylated.

It is found in the cell surface. The protein resides in the cell membrane. Its subcellular location is the endosome. Functionally, receptor for lysophosphatidic acid (LPA). Plays a role in the reorganization of the actin cytoskeleton, cell migration, differentiation and proliferation, and thereby contributes to the responses to tissue damage and infectious agents. Activates downstream signaling cascades via the G(i)/G(o), G(12)/G(13), and G(q) families of heteromeric G proteins. Signaling inhibits adenylyl cyclase activity and decreases cellular cAMP levels. Signaling triggers an increase of cytoplasmic Ca(2+) levels. Activates RALA; this leads to the activation of phospholipase C (PLC) and the formation of inositol 1,4,5-trisphosphate. Signaling mediates activation of down-stream MAP kinases. Contributes to the regulation of cell shape. Promotes Rho-dependent reorganization of the actin cytoskeleton in neuronal cells and neurite retraction. Promotes the activation of Rho and the formation of actin stress fibers. Promotes formation of lamellipodia at the leading edge of migrating cells via activation of RAC1. Through its function as LPA receptor, plays a role in chemotaxis and cell migration, including responses to injury and wounding. Plays a role in triggering inflammation in response to bacterial lipopolysaccharide (LPS) via its interaction with CD14. Promotes cell proliferation in response to LPA. Inhibits the intracellular ciliogenesis pathway in response to LPA and through AKT1 activation. Required for normal skeleton development. May play a role in osteoblast differentiation. Required for normal brain development. Required for normal proliferation, survival and maturation of newly formed neurons in the adult dentate gyrus. Plays a role in pain perception and in the initiation of neuropathic pain. The sequence is that of Lysophosphatidic acid receptor 1 (LPAR1) from Bos taurus (Bovine).